Reading from the N-terminus, the 248-residue chain is MTPIFFNQQYPTLVDICARWQLVYDANATFELRFESDTLSLHKRDEPKLDGIVVDFVTGAVAHRRKFGGGRGQSIAKAVGLKQGVMPSVVDGTAGLGRDAFVLASLGCTVTMVERHPVVAALLEDGLRRAYQDAEIGDWMRERMRLFHGSSLEALSKLAQEIDVVYLDPMYPHRDKSALVKKEMRVFQSLVGADLDADGLLAPALALATKRVVVKRPDYAEDLDGVKPNTVIETKKNRFDVYVKAAMK.

S-adenosyl-L-methionine contacts are provided by residues 98 to 99 (RD), 114 to 115 (ER), 150 to 151 (SS), and aspartate 168.

This sequence belongs to the methyltransferase superfamily. RsmJ family.

It localises to the cytoplasm. It carries out the reaction guanosine(1516) in 16S rRNA + S-adenosyl-L-methionine = N(2)-methylguanosine(1516) in 16S rRNA + S-adenosyl-L-homocysteine + H(+). Specifically methylates the guanosine in position 1516 of 16S rRNA. The polypeptide is Ribosomal RNA small subunit methyltransferase J (Shewanella baltica (strain OS185)).